A 153-amino-acid chain; its full sequence is 3-hydroxyacyl-[acyl-carrier-protein] dehydratase FabZ (153 aa).

H54 is an active-site residue.

This sequence belongs to the thioester dehydratase family. FabZ subfamily.

It localises to the cytoplasm. The catalysed reaction is a (3R)-hydroxyacyl-[ACP] = a (2E)-enoyl-[ACP] + H2O. Involved in unsaturated fatty acids biosynthesis. Catalyzes the dehydration of short chain beta-hydroxyacyl-ACPs and long chain saturated and unsaturated beta-hydroxyacyl-ACPs. The polypeptide is 3-hydroxyacyl-[acyl-carrier-protein] dehydratase FabZ (Chlamydia muridarum (strain MoPn / Nigg)).